A 429-amino-acid polypeptide reads, in one-letter code: Ribosomal RNA small subunit methyltransferase B (429 aa).

S-adenosyl-L-methionine-binding positions include 254-260 (CAAPGGK), D277, D303, and D322. The active-site Nucleophile is the C375. The interval 397-419 (ALSETGTPDQPGQQNLPGGEEGD) is disordered. A compositionally biased stretch (polar residues) spans 400 to 412 (ETGTPDQPGQQNL).

The protein belongs to the class I-like SAM-binding methyltransferase superfamily. RsmB/NOP family.

It is found in the cytoplasm. The catalysed reaction is cytidine(967) in 16S rRNA + S-adenosyl-L-methionine = 5-methylcytidine(967) in 16S rRNA + S-adenosyl-L-homocysteine + H(+). In terms of biological role, specifically methylates the cytosine at position 967 (m5C967) of 16S rRNA. The sequence is that of Ribosomal RNA small subunit methyltransferase B from Salmonella typhi.